The following is a 131-amino-acid chain: Small ribosomal subunit protein uS8 (131 aa).

It belongs to the universal ribosomal protein uS8 family. As to quaternary structure, part of the 30S ribosomal subunit. Contacts proteins S5 and S12.

Functionally, one of the primary rRNA binding proteins, it binds directly to 16S rRNA central domain where it helps coordinate assembly of the platform of the 30S subunit. The chain is Small ribosomal subunit protein uS8 from Thiobacillus denitrificans (strain ATCC 25259 / T1).